A 450-amino-acid chain; its full sequence is UDP-N-acetylmuramoylalanine--D-glutamate ligase (450 aa).

Residue G119–T125 participates in ATP binding.

It belongs to the MurCDEF family.

Its subcellular location is the cytoplasm. It carries out the reaction UDP-N-acetyl-alpha-D-muramoyl-L-alanine + D-glutamate + ATP = UDP-N-acetyl-alpha-D-muramoyl-L-alanyl-D-glutamate + ADP + phosphate + H(+). It participates in cell wall biogenesis; peptidoglycan biosynthesis. Its function is as follows. Cell wall formation. Catalyzes the addition of glutamate to the nucleotide precursor UDP-N-acetylmuramoyl-L-alanine (UMA). The sequence is that of UDP-N-acetylmuramoylalanine--D-glutamate ligase from Streptococcus sanguinis (strain SK36).